Reading from the N-terminus, the 557-residue chain is Hyaluronan synthase 3 (557 aa).

The Cytoplasmic portion of the chain corresponds to 1–10 (MPGKFQTGLR). Residues 11 to 31 (VLATCLFALLVLGGILVAYVT) form a helical membrane-spanning segment. The Extracellular segment spans residues 32-44 (GYQFIHTDRHHLS). Residues 45-65 (FGLYGAILGLHLLSQSLFAFL) traverse the membrane as a helical segment. The Cytoplasmic segment spans residues 66 to 367 (EHRKMRGGGR…NALWFHKHHL (302 aa)). The chain crosses the membrane as a helical span at residues 368-388 (WMTYESVVTGFFPFFLVATVV). The Extracellular segment spans residues 389–398 (QLFYRGRVWN). The helical transmembrane segment at 399–419 (ILLFLLTVQLVGILKATYACI) threads the bilayer. Topologically, residues 420-430 (LRGNAEMIFMS) are cytoplasmic. Residues 431–451 (LYSLLYMTSLLPAKIFAVITI) form a helical membrane-spanning segment. Residues 452-463 (KKSGWGTSGRRK) lie on the Extracellular side of the membrane. A helical transmembrane segment spans residues 464 to 484 (LVVNFMGMVPVSVWFCILLGG). At 485 to 501 (LVYTAYCQSHDPFTETE) the chain is on the cytoplasmic side. Residues 502–522 (LLFLLTGAILYGCYWVALLSL) form a helical membrane-spanning segment. Residues 523-557 (YLALIARRCGKRQELYNLALEEVSEPEPAAKAIKP) are Extracellular-facing.

This sequence belongs to the NodC/HAS family. Requires Mg(2+) as cofactor. In terms of processing, O-GlcNAcylation increases the hyaluronan synthase activity, HAS3 stability and its plasma membrane residence. The concentration of UDP-GlcNAc controls the level of O-GlcNAc modification.

Its subcellular location is the cell membrane. The protein localises to the golgi apparatus membrane. The protein resides in the golgi apparatus. It is found in the trans-Golgi network membrane. It localises to the cytoplasmic vesicle. It carries out the reaction [hyaluronan](n) + UDP-N-acetyl-alpha-D-glucosamine = N-acetyl-beta-D-glucosaminyl-(1-&gt;4)-[hyaluronan](n) + UDP + H(+). It catalyses the reaction N-acetyl-beta-D-glucosaminyl-(1-&gt;4)-[hyaluronan](n) + UDP-alpha-D-glucuronate = [hyaluronan](n+1) + UDP + H(+). The protein operates within glycan biosynthesis; hyaluronan biosynthesis. Catalyzes the addition of GlcNAc or GlcUA monosaccharides to the nascent hyaluronan polymer. Therefore, it is essential to hyaluronan synthesis a major component of most extracellular matrices that has a structural role in tissues architectures and regulates cell adhesion, migration and differentiation. This is one of three isoenzymes responsible for cellular hyaluronan synthesis. In Xenopus laevis (African clawed frog), this protein is Hyaluronan synthase 3 (has3).